We begin with the raw amino-acid sequence, 144 residues long: Ninjurin-2 (144 aa).

Over 1-62 (MESDREIIHL…KSVLEQGPFS (62 aa)) the chain is Extracellular. A helix alpha1 region spans residues 27 to 39 (NHYATKKSVAESM). A helix alpha2 region spans residues 40–59 (LDVALFMSNAMRLKSVLEQG). Residues 63-94 (QYYTTLLTLISASLLLQVVIGILLVVIARLNL) form a helical membrane-spanning segment. Topologically, residues 95–98 (NEVE) are cytoplasmic. Residues 99–128 (NQWRLNQLNNAATTLVFITVVINIFITAFG) traverse the membrane as a helical segment. Cholesterol is bound at residue glutamine 105. Residues 129 to 144 (AHKTGSVAARTSSNPI) lie on the Extracellular side of the membrane.

The protein belongs to the ninjurin family. As to quaternary structure, homooligomer; in response to stimuli, homooligomerizes into filaments. In contrast to NINJ1, the filament is curved toward the intracellular space, preventing its circularization on a relatively flat membrane to mediate plasma membrane rupture: curvature is caused by cholesterol-binding at the cytoplasmic leaflet.

Its subcellular location is the cell membrane. In terms of biological role, its role in unclear. In contrast to NINJ1 paralog, does not mediate plasma membrane rupture (cytolysis) downstream of necroptotic and pyroptotic programmed cell death. While it is able to oligomerize and form filaments, filaments are curved toward the intracellular space, preventing circularization to mediate plasma membrane rupture. May act as a homophilic transmembrane adhesion molecule involved in nerve regeneration. Promotes axonal growth. This is Ninjurin-2 (Ninj2) from Rattus norvegicus (Rat).